The following is a 188-amino-acid chain: dCTP deaminase (188 aa).

Residues 111-116 (KSTYAR), 135-137 (TLE), Q156, Y170, and Q180 each bind dCTP. E137 acts as the Proton donor/acceptor in catalysis.

The protein belongs to the dCTP deaminase family. In terms of assembly, homotrimer.

The enzyme catalyses dCTP + H2O + H(+) = dUTP + NH4(+). It functions in the pathway pyrimidine metabolism; dUMP biosynthesis; dUMP from dCTP (dUTP route): step 1/2. Catalyzes the deamination of dCTP to dUTP. This chain is dCTP deaminase, found in Nitrosomonas europaea (strain ATCC 19718 / CIP 103999 / KCTC 2705 / NBRC 14298).